We begin with the raw amino-acid sequence, 232 residues long: MSLVDTVKNAFVPIHREGYPFIAACGAGTLFLGYFSSVLFWLGLILTAWCVYFFRDPERVTPVDDRLVVSPADGIISAVGPAVPPRELGLGNVEMTRISVFMNVFSCHVNRSPVRGRIAKIEHRPGKFLNAELDKASTENERNGLVIESPNGTVAAVQIAGLVARRIVCWAEAGGSIGTGERFGLIRFGSRVDVFLPLTATPRVAVGQTAVGGETVLAEFGGVAGTPLVRIS.

Ser190 acts as the Schiff-base intermediate with substrate; via pyruvic acid in catalysis. A Pyruvic acid (Ser); by autocatalysis modification is found at Ser190.

Belongs to the phosphatidylserine decarboxylase family. PSD-A subfamily. Heterodimer of a large membrane-associated beta subunit and a small pyruvoyl-containing alpha subunit. Requires pyruvate as cofactor. In terms of processing, is synthesized initially as an inactive proenzyme. Formation of the active enzyme involves a self-maturation process in which the active site pyruvoyl group is generated from an internal serine residue via an autocatalytic post-translational modification. Two non-identical subunits are generated from the proenzyme in this reaction, and the pyruvate is formed at the N-terminus of the alpha chain, which is derived from the carboxyl end of the proenzyme. The post-translation cleavage follows an unusual pathway, termed non-hydrolytic serinolysis, in which the side chain hydroxyl group of the serine supplies its oxygen atom to form the C-terminus of the beta chain, while the remainder of the serine residue undergoes an oxidative deamination to produce ammonia and the pyruvoyl prosthetic group on the alpha chain.

The protein localises to the cell membrane. The catalysed reaction is a 1,2-diacyl-sn-glycero-3-phospho-L-serine + H(+) = a 1,2-diacyl-sn-glycero-3-phosphoethanolamine + CO2. It functions in the pathway phospholipid metabolism; phosphatidylethanolamine biosynthesis; phosphatidylethanolamine from CDP-diacylglycerol: step 2/2. Functionally, catalyzes the formation of phosphatidylethanolamine (PtdEtn) from phosphatidylserine (PtdSer). The protein is Phosphatidylserine decarboxylase proenzyme of Mesorhizobium japonicum (strain LMG 29417 / CECT 9101 / MAFF 303099) (Mesorhizobium loti (strain MAFF 303099)).